The primary structure comprises 148 residues: Ribonuclease H (148 aa).

The RNase H type-1 domain maps to 1-142 (MSDSVELYTD…ADQLANRGVD (142 aa)). Residues D10, E48, D70, and D134 each contribute to the Mg(2+) site. The disordered stretch occupies residues 129–148 (GNERADQLANRGVDEVRAKR).

Belongs to the RNase H family. Monomer. Requires Mg(2+) as cofactor.

Its subcellular location is the cytoplasm. The enzyme catalyses Endonucleolytic cleavage to 5'-phosphomonoester.. Functionally, endonuclease that specifically degrades the RNA of RNA-DNA hybrids. This chain is Ribonuclease H, found in Pseudomonas putida (strain W619).